The sequence spans 293 residues: Pantothenate synthetase (293 aa).

30-37 (MGYLHKGH) contacts ATP. His-37 (proton donor) is an active-site residue. Gln-61 contacts (R)-pantoate. Position 61 (Gln-61) interacts with beta-alanine. 147–150 (GEKD) lines the ATP pocket. Gln-153 contacts (R)-pantoate. ATP contacts are provided by residues Val-176 and 184-187 (CSSR).

It belongs to the pantothenate synthetase family. Homodimer.

Its subcellular location is the cytoplasm. It carries out the reaction (R)-pantoate + beta-alanine + ATP = (R)-pantothenate + AMP + diphosphate + H(+). It functions in the pathway cofactor biosynthesis; (R)-pantothenate biosynthesis; (R)-pantothenate from (R)-pantoate and beta-alanine: step 1/1. In terms of biological role, catalyzes the condensation of pantoate with beta-alanine in an ATP-dependent reaction via a pantoyl-adenylate intermediate. This is Pantothenate synthetase from Brucella melitensis biotype 2 (strain ATCC 23457).